A 334-amino-acid chain; its full sequence is Aspartate carbamoyltransferase catalytic subunit (334 aa).

The carbamoyl phosphate site is built by Arg-70 and Thr-71. Lys-98 serves as a coordination point for L-aspartate. Carbamoyl phosphate contacts are provided by Arg-120, His-150, and Gln-153. Residues Arg-183 and Arg-239 each contribute to the L-aspartate site. Residues Gly-280 and Pro-281 each contribute to the carbamoyl phosphate site.

This sequence belongs to the aspartate/ornithine carbamoyltransferase superfamily. ATCase family. In terms of assembly, heterododecamer (2C3:3R2) of six catalytic PyrB chains organized as two trimers (C3), and six regulatory PyrI chains organized as three dimers (R2).

The catalysed reaction is carbamoyl phosphate + L-aspartate = N-carbamoyl-L-aspartate + phosphate + H(+). Its pathway is pyrimidine metabolism; UMP biosynthesis via de novo pathway; (S)-dihydroorotate from bicarbonate: step 2/3. Its function is as follows. Catalyzes the condensation of carbamoyl phosphate and aspartate to form carbamoyl aspartate and inorganic phosphate, the committed step in the de novo pyrimidine nucleotide biosynthesis pathway. The chain is Aspartate carbamoyltransferase catalytic subunit from Pseudomonas aeruginosa (strain LESB58).